We begin with the raw amino-acid sequence, 431 residues long: Adenylosuccinate synthetase (431 aa).

Residues 13 to 19 (GDEGKGK) and 41 to 43 (GHT) contribute to the GTP site. The active-site Proton acceptor is the Asp-14. Mg(2+) contacts are provided by Asp-14 and Gly-41. Residues 14 to 17 (DEGK), 39 to 42 (NAGH), Thr-130, Arg-144, Gln-225, Thr-240, and Arg-304 contribute to the IMP site. The Proton donor role is filled by His-42. 300–306 (ATTGRKR) lines the substrate pocket. GTP contacts are provided by residues Arg-306, 332–334 (KLD), and 415–417 (STG).

The protein belongs to the adenylosuccinate synthetase family. As to quaternary structure, homodimer. It depends on Mg(2+) as a cofactor.

The protein localises to the cytoplasm. It carries out the reaction IMP + L-aspartate + GTP = N(6)-(1,2-dicarboxyethyl)-AMP + GDP + phosphate + 2 H(+). The protein operates within purine metabolism; AMP biosynthesis via de novo pathway; AMP from IMP: step 1/2. Functionally, plays an important role in the de novo pathway of purine nucleotide biosynthesis. Catalyzes the first committed step in the biosynthesis of AMP from IMP. The sequence is that of Adenylosuccinate synthetase from Shewanella halifaxensis (strain HAW-EB4).